The primary structure comprises 367 residues: Probable butyrate kinase (367 aa).

Belongs to the acetokinase family.

The protein resides in the cytoplasm. It carries out the reaction butanoate + ATP = butanoyl phosphate + ADP. This is Probable butyrate kinase from Bacillus cereus (strain Q1).